Consider the following 408-residue polypeptide: Tryptophan synthase beta chain (408 aa).

At Lys-103 the chain carries N6-(pyridoxal phosphate)lysine.

The protein belongs to the TrpB family. In terms of assembly, tetramer of two alpha and two beta chains. Requires pyridoxal 5'-phosphate as cofactor.

The catalysed reaction is (1S,2R)-1-C-(indol-3-yl)glycerol 3-phosphate + L-serine = D-glyceraldehyde 3-phosphate + L-tryptophan + H2O. The protein operates within amino-acid biosynthesis; L-tryptophan biosynthesis; L-tryptophan from chorismate: step 5/5. Functionally, the beta subunit is responsible for the synthesis of L-tryptophan from indole and L-serine. The sequence is that of Tryptophan synthase beta chain from Koribacter versatilis (strain Ellin345).